The sequence spans 760 residues: Sphingosine kinase B (760 aa).

The disordered stretch occupies residues 1 to 108; sequence MENNNNEPAE…NNNNNEPVTS (108 aa). The segment covering 12–39 has biased composition (basic and acidic residues); the sequence is VQEKGPKLKNDIDLNDQFKDEKEKKEEI. Over residues 40-106 the composition is skewed to low complexity; the sequence is SSSSIENKNN…NNNNNNNEPV (67 aa). Residues 247–383 enclose the DAGKc domain; sequence PKNRKIRILI…LDVCIVQQPT (137 aa). ATP is bound by residues 257 to 259 and threonine 288; that span reads NPK. 313–316 is a substrate binding site; that stretch reads SGDG. Catalysis depends on aspartate 315, which acts as the Proton donor/acceptor. ATP-binding positions include glutamate 320 and 345–347; that span reads GTG. The disordered stretch occupies residues 394–438; that stretch reads TVTTTTTTTSPTSASPTITSANNNNNNNNNNNNNNNNNNNNNNNN. Residue aspartate 461 participates in substrate binding. ATP contacts are provided by arginine 468 and arginine 474. The tract at residues 535 to 605 is disordered; sequence DNDNNNKNKN…SSPRSDINMS (71 aa). Over residues 549-597 the composition is skewed to low complexity; the sequence is EINSTTSNNNNNNNTTTTSTSSSTSTSTSTSSLTATTTTAKSTNSLSSS. An ATP-binding site is contributed by 734–736; the sequence is DGE.

The catalysed reaction is a sphingoid base + ATP = a sphingoid 1-phosphate + ADP + H(+). Its activity is regulated as follows. Inhibited by N,N,-dimethylsphingosine. Functionally, catalyzes the phosphorylation of sphingosine to form sphingosine-1-phosphate (S1P), which probably acts intracellularly as a second messenger perhaps by promoting cell proliferation. In Dictyostelium discoideum (Social amoeba), this protein is Sphingosine kinase B (sgkB).